We begin with the raw amino-acid sequence, 446 residues long: Histone acetyltransferase type B subunit 2 (446 aa).

WD repeat units lie at residues 138 to 178 (DHPG…ITPS), 189 to 229 (GHKE…GTSK), 231 to 270 (LKYS…QIID), 286 to 326 (GHSD…SKVH), and 330 to 370 (GHQD…DEQT). The interval 372–376 (DDAED) is interaction with the histone H4 N-terminus. The WD 6 repeat unit spans residues 387-427 (GHTNHLADFSWNRNDPWLVCSAAEDNLLQIWKVANSIVSKE). A disordered region spans residues 427–446 (EPADMSTPELDDPKPKQSSH). Residues 437 to 446 (DDPKPKQSSH) show a composition bias toward basic and acidic residues.

The protein belongs to the WD repeat RBAP46/RBAP48/MSI1 family. As to quaternary structure, component of the HAT-B complex composed of at least hat-1 and hat-2. The HAT-B complex binds to histone H4 tail.

It localises to the cytoplasm. Its subcellular location is the nucleus. In terms of biological role, regulatory subunit of the histone acetylase B (HAT-B) complex. The complex acetylates 'Lys-12' of histone H4 which is required for telomeric silencing. In Neurospora crassa (strain ATCC 24698 / 74-OR23-1A / CBS 708.71 / DSM 1257 / FGSC 987), this protein is Histone acetyltransferase type B subunit 2 (hat-2).